A 408-amino-acid polypeptide reads, in one-letter code: tRNA-specific 2-thiouridylase MnmA (408 aa).

ATP contacts are provided by residues 27–34 (AMSGGVDS) and Leu53. The active-site Nucleophile is Cys121. Cysteines 121 and 222 form a disulfide. Gly145 serves as a coordination point for ATP. The tract at residues 172-174 (RDQ) is interaction with tRNA. The Cysteine persulfide intermediate role is filled by Cys222.

Belongs to the MnmA/TRMU family.

Its subcellular location is the cytoplasm. It catalyses the reaction S-sulfanyl-L-cysteinyl-[protein] + uridine(34) in tRNA + AH2 + ATP = 2-thiouridine(34) in tRNA + L-cysteinyl-[protein] + A + AMP + diphosphate + H(+). Catalyzes the 2-thiolation of uridine at the wobble position (U34) of tRNA, leading to the formation of s(2)U34. The sequence is that of tRNA-specific 2-thiouridylase MnmA from Rhizobium etli (strain CIAT 652).